The chain runs to 384 residues: Succinyl-diaminopimelate desuccinylase (384 aa).

Histidine 71 provides a ligand contact to Zn(2+). Residue aspartate 73 is part of the active site. Residue aspartate 104 participates in Zn(2+) binding. Glutamate 138 (proton acceptor) is an active-site residue. Zn(2+)-binding residues include glutamate 139, glutamate 167, and histidine 353.

It belongs to the peptidase M20A family. DapE subfamily. In terms of assembly, homodimer. The cofactor is Zn(2+). It depends on Co(2+) as a cofactor.

It carries out the reaction N-succinyl-(2S,6S)-2,6-diaminopimelate + H2O = (2S,6S)-2,6-diaminopimelate + succinate. Its pathway is amino-acid biosynthesis; L-lysine biosynthesis via DAP pathway; LL-2,6-diaminopimelate from (S)-tetrahydrodipicolinate (succinylase route): step 3/3. In terms of biological role, catalyzes the hydrolysis of N-succinyl-L,L-diaminopimelic acid (SDAP), forming succinate and LL-2,6-diaminopimelate (DAP), an intermediate involved in the bacterial biosynthesis of lysine and meso-diaminopimelic acid, an essential component of bacterial cell walls. The protein is Succinyl-diaminopimelate desuccinylase of Aromatoleum aromaticum (strain DSM 19018 / LMG 30748 / EbN1) (Azoarcus sp. (strain EbN1)).